The chain runs to 710 residues: Prolyl endopeptidase (710 aa).

An N-acetylmethionine modification is found at methionine 1. Lysine 157 carries the post-translational modification N6-acetyllysine. Catalysis depends on charge relay system residues serine 554, aspartate 641, and histidine 680.

The protein belongs to the peptidase S9A family. Monomer. The N-terminus is blocked.

It localises to the cytoplasm. It carries out the reaction Hydrolysis of Pro-|-Xaa &gt;&gt; Ala-|-Xaa in oligopeptides.. Cleaves peptide bonds on the C-terminal side of prolyl residues within peptides that are up to approximately 30 amino acids long. The chain is Prolyl endopeptidase (PREP) from Homo sapiens (Human).